We begin with the raw amino-acid sequence, 441 residues long: Glutamate-1-semialdehyde 2,1-aminomutase (441 aa).

Residue K279 is modified to N6-(pyridoxal phosphate)lysine.

It belongs to the class-III pyridoxal-phosphate-dependent aminotransferase family. HemL subfamily. As to quaternary structure, homodimer. Requires pyridoxal 5'-phosphate as cofactor.

Its subcellular location is the cytoplasm. The enzyme catalyses (S)-4-amino-5-oxopentanoate = 5-aminolevulinate. It participates in porphyrin-containing compound metabolism; protoporphyrin-IX biosynthesis; 5-aminolevulinate from L-glutamyl-tRNA(Glu): step 2/2. In Leptospira borgpetersenii serovar Hardjo-bovis (strain JB197), this protein is Glutamate-1-semialdehyde 2,1-aminomutase.